Reading from the N-terminus, the 288-residue chain is Energy-coupling factor transporter ATP-binding protein EcfA2 (288 aa).

Positions 3–246 (IKLEQLGYCY…PDELVDLGLS (244 aa)) constitute an ABC transporter domain. ATP is bound at residue 40-47 (GHTGSGKS).

This sequence belongs to the ABC transporter superfamily. Energy-coupling factor EcfA family. In terms of assembly, forms a stable energy-coupling factor (ECF) transporter complex composed of 2 membrane-embedded substrate-binding proteins (S component), 2 ATP-binding proteins (A component) and 2 transmembrane proteins (T component).

It localises to the cell membrane. Its function is as follows. ATP-binding (A) component of a common energy-coupling factor (ECF) ABC-transporter complex. Unlike classic ABC transporters this ECF transporter provides the energy necessary to transport a number of different substrates. In Listeria monocytogenes serotype 4b (strain F2365), this protein is Energy-coupling factor transporter ATP-binding protein EcfA2.